The following is a 358-amino-acid chain: uncharacterized protein (358 aa).

It belongs to the SMP-30/CGR1 family.

This is an uncharacterized protein from Saccharomyces cerevisiae (strain ATCC 204508 / S288c) (Baker's yeast).